The sequence spans 172 residues: uncharacterized protein (172 aa).

The disordered stretch occupies residues 22–64 (RSVSSSPAAKQPAPGTVAQSFPPGELALRDETGGRGRGTRGIR).

This is an uncharacterized protein from Human cytomegalovirus (strain AD169) (HHV-5).